We begin with the raw amino-acid sequence, 169 residues long: HTH-type transcriptional regulator PchR (169 aa).

In terms of domain architecture, HTH marR-type spans 10–153 (YDIYVRLLHL…VLKFLEQLTS (144 aa)). Positions 64 to 87 (NAGIARKMNLSKANVTKISTKLIK) form a DNA-binding region, H-T-H motif.

Homodimer.

Represses the expression of the yvmC-cypX operon, which is involved in pulcherriminic acid biosynthesis. Also negatively regulates yvmA, yvnB and its own expression. Positively regulates yisI expression. Acts by binding specifically to a 14-bp palindromic motif, the YvmB box, which is present in the promoter region of the target genes. This Bacillus subtilis (strain 168) protein is HTH-type transcriptional regulator PchR.